Consider the following 169-residue polypeptide: MHVWLILSLASLWTSSIAYSQFLFSMSTGPFICTVKDNQVFVANLPWTMLEGDDIQVGKEFAARVEDCTNVKHDMAPTCTKPPPFCGPQDMKMFNFVGCSVLGNKLFIDQKYVRDLTAKDHAEVQTFREKIAAFEEQQENQPPSSGMPHGAVPAGGLSPPPPPSFCTVQ.

Residues 1–20 form the signal peptide; sequence MHVWLILSLASLWTSSIAYS. Residue Gln-21 is modified to Pyrrolidone carboxylic acid. Disulfide bonds link Cys-33/Cys-79, Cys-68/Cys-86, and Cys-99/Cys-166. A disordered region spans residues 135-169; it reads EEQQENQPPSSGMPHGAVPAGGLSPPPPPSFCTVQ. Pro residues predominate over residues 158–169; that stretch reads SPPPPPSFCTVQ.

Belongs to the protease inhibitor I33 family. In terms of tissue distribution, body wall.

It localises to the secreted. Its function is as follows. This is an inhibitor of the aspartic protease pepsin. The protein is Major pepsin inhibitor 3 of Ascaris suum (Pig roundworm).